Here is a 101-residue protein sequence, read N- to C-terminus: Protein S100-A4 (101 aa).

At Ala2 the chain carries N-acetylalanine. 2 consecutive EF-hand domains span residues 12-47 and 50-85; these read IVSTFHKYSGNEGDKFKLNKTELKELLTRELPSFLG and TDEAAFQKLMNNLDSNRDNEVDFQEYCVFLSCIAMM. Positions 28 and 33 each coordinate Ca(2+). Lys35 bears the N6-acetyllysine mark. Ca(2+)-binding residues include Asp63, Asn65, Asp67, Glu69, and Glu74.

The protein belongs to the S-100 family. In terms of assembly, homodimer. Interacts with PPFIBP1 in a calcium-dependent mode. Interacts with PGLYRP1; this complex acts as a chemoattractant that promotes lymphocyte movement. Interacts with MYH9; this interaction increases cell motility. Interacts with Annexin 2/ANXA2. Interacts with TP53; this interaction promotes TP53 degradation. Interacts with CCR5 and CXCR3. Interacts with FCGR3A; this interaction inhibits PKC-dependent phosphorylation of FCGR3A.

The protein localises to the secreted. The protein resides in the nucleus. It is found in the cytoplasm. In terms of biological role, calcium-binding protein that plays a role in various cellular processes including motility, angiogenesis, cell differentiation, apoptosis, and autophagy. Increases cell motility and invasiveness by interacting with non-muscle myosin heavy chain (NMMHC) IIA/MYH9. Mechanistically, promotes filament depolymerization and increases the amount of soluble myosin-IIA, resulting in the formation of stable protrusions facilitating chemotaxis. Also modulates the pro-apoptotic function of TP53 by binding to its C-terminal transactivation domain within the nucleus and reducing its protein levels. Within the extracellular space, stimulates cytokine production including granulocyte colony-stimulating factor and CCL24 from T-lymphocytes. In addition, stimulates T-lymphocyte chemotaxis by acting as a chemoattractant complex with PGLYRP1 that promotes lymphocyte migration via CCR5 and CXCR3 receptors. In Rattus norvegicus (Rat), this protein is Protein S100-A4 (S100a4).